The following is a 442-amino-acid chain: Histidinol dehydrogenase (442 aa).

The NAD(+) site is built by Tyr-136, Gln-197, and Asn-220. The substrate site is built by Ser-243, Gln-265, and His-268. Residues Gln-265 and His-268 each contribute to the Zn(2+) site. Residues Glu-333 and His-334 each act as proton acceptor in the active site. His-334, Asp-367, Glu-421, and His-426 together coordinate substrate. Asp-367 serves as a coordination point for Zn(2+). His-426 provides a ligand contact to Zn(2+).

Belongs to the histidinol dehydrogenase family. Requires Zn(2+) as cofactor.

It carries out the reaction L-histidinol + 2 NAD(+) + H2O = L-histidine + 2 NADH + 3 H(+). It functions in the pathway amino-acid biosynthesis; L-histidine biosynthesis; L-histidine from 5-phospho-alpha-D-ribose 1-diphosphate: step 9/9. In terms of biological role, catalyzes the sequential NAD-dependent oxidations of L-histidinol to L-histidinaldehyde and then to L-histidine. The sequence is that of Histidinol dehydrogenase from Pseudomonas fluorescens (strain ATCC BAA-477 / NRRL B-23932 / Pf-5).